A 163-amino-acid polypeptide reads, in one-letter code: Protein MATERNALLY EXPRESSED GENE 5 (163 aa).

The region spanning 38 to 117 is the RRM domain; that stretch reads STLYIEGLPA…DDVNVSAPAE (80 aa). 2 disulfide bridges follow: cysteine 140–cysteine 162 and cysteine 143–cysteine 151.

Belongs to the MEG family. As to expression, ubiquitous.

The protein is Protein MATERNALLY EXPRESSED GENE 5 (MEG5) of Zea mays (Maize).